The primary structure comprises 217 residues: Imidazole glycerol phosphate synthase subunit HisH (217 aa).

Residues Gln-6 to Gln-214 form the Glutamine amidotransferase type-1 domain. Cys-84 functions as the Nucleophile in the catalytic mechanism. Residues His-189 and Glu-191 contribute to the active site.

As to quaternary structure, heterodimer of HisH and HisF.

The protein localises to the cytoplasm. It catalyses the reaction 5-[(5-phospho-1-deoxy-D-ribulos-1-ylimino)methylamino]-1-(5-phospho-beta-D-ribosyl)imidazole-4-carboxamide + L-glutamine = D-erythro-1-(imidazol-4-yl)glycerol 3-phosphate + 5-amino-1-(5-phospho-beta-D-ribosyl)imidazole-4-carboxamide + L-glutamate + H(+). The enzyme catalyses L-glutamine + H2O = L-glutamate + NH4(+). Its pathway is amino-acid biosynthesis; L-histidine biosynthesis; L-histidine from 5-phospho-alpha-D-ribose 1-diphosphate: step 5/9. IGPS catalyzes the conversion of PRFAR and glutamine to IGP, AICAR and glutamate. The HisH subunit catalyzes the hydrolysis of glutamine to glutamate and ammonia as part of the synthesis of IGP and AICAR. The resulting ammonia molecule is channeled to the active site of HisF. The polypeptide is Imidazole glycerol phosphate synthase subunit HisH (Synechococcus sp. (strain ATCC 27144 / PCC 6301 / SAUG 1402/1) (Anacystis nidulans)).